The sequence spans 282 residues: Probable protein phosphatase 2C 10 (282 aa).

The region spanning 34 to 281 is the PPM-type phosphatase domain; the sequence is KFGYSLVKGK…DDISCIVVRL (248 aa). The Mn(2+) site is built by D71, G72, D233, and D272.

Belongs to the PP2C family. Requires Mg(2+) as cofactor. Mn(2+) serves as cofactor.

It carries out the reaction O-phospho-L-seryl-[protein] + H2O = L-seryl-[protein] + phosphate. The catalysed reaction is O-phospho-L-threonyl-[protein] + H2O = L-threonyl-[protein] + phosphate. This is Probable protein phosphatase 2C 10 from Arabidopsis thaliana (Mouse-ear cress).